The chain runs to 267 residues: Malonyl-[acyl-carrier protein] O-methyltransferase (267 aa).

It belongs to the methyltransferase superfamily.

It catalyses the reaction malonyl-[ACP] + S-adenosyl-L-methionine = malonyl-[ACP] methyl ester + S-adenosyl-L-homocysteine. The protein operates within cofactor biosynthesis; biotin biosynthesis. Converts the free carboxyl group of a malonyl-thioester to its methyl ester by transfer of a methyl group from S-adenosyl-L-methionine (SAM). It allows to synthesize pimeloyl-ACP via the fatty acid synthetic pathway. The chain is Malonyl-[acyl-carrier protein] O-methyltransferase from Geobacter sulfurreducens (strain ATCC 51573 / DSM 12127 / PCA).